Reading from the N-terminus, the 417-residue chain is UDP-N-acetylglucosamine 1-carboxyvinyltransferase 2 (417 aa).

22–23 contributes to the phosphoenolpyruvate binding site; the sequence is KN. Arg-92 contacts UDP-N-acetyl-alpha-D-glucosamine. The active-site Proton donor is Cys-116. Residue Cys-116 is modified to 2-(S-cysteinyl)pyruvic acid O-phosphothioketal. UDP-N-acetyl-alpha-D-glucosamine contacts are provided by residues 121–125, Asp-305, and Ile-327; that span reads RPIDL.

It belongs to the EPSP synthase family. MurA subfamily.

Its subcellular location is the cytoplasm. The enzyme catalyses phosphoenolpyruvate + UDP-N-acetyl-alpha-D-glucosamine = UDP-N-acetyl-3-O-(1-carboxyvinyl)-alpha-D-glucosamine + phosphate. It functions in the pathway cell wall biogenesis; peptidoglycan biosynthesis. Cell wall formation. Adds enolpyruvyl to UDP-N-acetylglucosamine. The polypeptide is UDP-N-acetylglucosamine 1-carboxyvinyltransferase 2 (Caldanaerobacter subterraneus subsp. tengcongensis (strain DSM 15242 / JCM 11007 / NBRC 100824 / MB4) (Thermoanaerobacter tengcongensis)).